The following is a 541-amino-acid chain: Glucose-6-phosphate isomerase (541 aa).

Glu-354 serves as the catalytic Proton donor. Active-site residues include His-385 and Lys-505.

Belongs to the GPI family.

The protein resides in the cytoplasm. It carries out the reaction alpha-D-glucose 6-phosphate = beta-D-fructose 6-phosphate. It participates in carbohydrate biosynthesis; gluconeogenesis. Its pathway is carbohydrate degradation; glycolysis; D-glyceraldehyde 3-phosphate and glycerone phosphate from D-glucose: step 2/4. Its function is as follows. Catalyzes the reversible isomerization of glucose-6-phosphate to fructose-6-phosphate. In Cupriavidus metallidurans (strain ATCC 43123 / DSM 2839 / NBRC 102507 / CH34) (Ralstonia metallidurans), this protein is Glucose-6-phosphate isomerase.